An 884-amino-acid polypeptide reads, in one-letter code: Alanine--tRNA ligase (884 aa).

Histidine 565, histidine 569, cysteine 674, and histidine 678 together coordinate Zn(2+).

This sequence belongs to the class-II aminoacyl-tRNA synthetase family. The cofactor is Zn(2+).

It localises to the cytoplasm. It carries out the reaction tRNA(Ala) + L-alanine + ATP = L-alanyl-tRNA(Ala) + AMP + diphosphate. Its function is as follows. Catalyzes the attachment of alanine to tRNA(Ala) in a two-step reaction: alanine is first activated by ATP to form Ala-AMP and then transferred to the acceptor end of tRNA(Ala). Also edits incorrectly charged Ser-tRNA(Ala) and Gly-tRNA(Ala) via its editing domain. This chain is Alanine--tRNA ligase, found in Xanthobacter autotrophicus (strain ATCC BAA-1158 / Py2).